Here is a 203-residue protein sequence, read N- to C-terminus: Guanylate kinase (203 aa).

The Guanylate kinase-like domain occupies 3–181 (GTLYIVSAPS…ALDDLKAIFR (179 aa)). 10–17 (APSGAGKT) provides a ligand contact to ATP.

Belongs to the guanylate kinase family.

It localises to the cytoplasm. It carries out the reaction GMP + ATP = GDP + ADP. Its function is as follows. Essential for recycling GMP and indirectly, cGMP. In Pseudomonas aeruginosa (strain ATCC 15692 / DSM 22644 / CIP 104116 / JCM 14847 / LMG 12228 / 1C / PRS 101 / PAO1), this protein is Guanylate kinase (gmk).